Here is a 286-residue protein sequence, read N- to C-terminus: Pantothenate synthetase (286 aa).

30-37 (MGNLHAGH) contacts ATP. H37 (proton donor) is an active-site residue. (R)-pantoate is bound at residue Q61. Beta-alanine is bound at residue Q61. 149–152 (GQKD) serves as a coordination point for ATP. (R)-pantoate is bound at residue Q155. Residues V178 and 186-189 (LSSR) contribute to the ATP site.

It belongs to the pantothenate synthetase family. As to quaternary structure, homodimer.

It is found in the cytoplasm. The enzyme catalyses (R)-pantoate + beta-alanine + ATP = (R)-pantothenate + AMP + diphosphate + H(+). Its pathway is cofactor biosynthesis; (R)-pantothenate biosynthesis; (R)-pantothenate from (R)-pantoate and beta-alanine: step 1/1. Its function is as follows. Catalyzes the condensation of pantoate with beta-alanine in an ATP-dependent reaction via a pantoyl-adenylate intermediate. The polypeptide is Pantothenate synthetase (Stutzerimonas stutzeri (strain A1501) (Pseudomonas stutzeri)).